We begin with the raw amino-acid sequence, 959 residues long: Xylosyltransferase 1 (959 aa).

The Cytoplasmic segment spans residues 1–17 (MVAAPCARRLARRSHSA). A helical; Signal-anchor for type II membrane protein transmembrane segment spans residues 18–38 (LLAALTVLLLQTLVVWNFSSL). Residues 39–959 (DSGAGERRGG…GAVKPDGRLR (921 aa)) are Lumenal-facing. Residues 42-259 (AGERRGGAAV…KYDQPPKCDI (218 aa)) are disordered. Gly residues predominate over residues 78 to 104 (RGGGGGGGGGGGGRGPQARARGGGPGE). Basic and acidic residues predominate over residues 145 to 161 (KVRTDSNNENSVPKDFE). Positions 163 to 172 (VDNSNFAPRT) are enriched in polar residues. Residues 177 to 204 (HQPELAKKPPSRQKELLKRKLEQQEKGK) show a composition bias toward basic and acidic residues. The N-linked (GlcNAc...) asparagine glycan is linked to asparagine 226. Residues 249 to 259 (TKYDQPPKCDI) are compositionally biased toward basic and acidic residues. 4 cysteine pairs are disulfide-bonded: cysteine 257/cysteine 285, cysteine 301/cysteine 542, cysteine 561/cysteine 574, and cysteine 563/cysteine 572. Residues valine 333, aspartate 361, and 390–392 (TIW) each bind UDP-alpha-D-xylose. Residue asparagine 421 is glycosylated (N-linked (GlcNAc...) asparagine). 494-495 (DW) is a binding site for UDP-alpha-D-xylose. Residues serine 575 and 598-599 (RK) each bind UDP-alpha-D-xylose. 2 cysteine pairs are disulfide-bonded: cysteine 675–cysteine 927 and cysteine 920–cysteine 933. The N-linked (GlcNAc...) asparagine glycan is linked to asparagine 777. A disordered region spans residues 940–959 (SFSPDPKSELGAVKPDGRLR).

It belongs to the glycosyltransferase 14 family. XylT subfamily. As to quaternary structure, monomer. The cofactor is a divalent metal cation. Contains 7 disulfide bonds. In terms of processing, N-glycosylated. As to expression, widely expressed. Expressed at higher level in placenta, kidney and pancreas. Weakly expressed in skeletal muscle.

It is found in the golgi apparatus membrane. The protein resides in the secreted. The enzyme catalyses UDP-alpha-D-xylose + L-seryl-[protein] = 3-O-(beta-D-xylosyl)-L-seryl-[protein] + UDP + H(+). It participates in glycan metabolism; chondroitin sulfate biosynthesis. The protein operates within glycan metabolism; heparan sulfate biosynthesis. Catalyzes the first step in the biosynthesis of chondroitin sulfate and dermatan sulfate proteoglycans, such as DCN. Transfers D-xylose from UDP-D-xylose to specific serine residues of the core protein. Required for normal embryonic and postnatal skeleton development, especially of the long bones. Required for normal maturation of chondrocytes during bone development, and normal onset of ossification. This chain is Xylosyltransferase 1 (XYLT1), found in Homo sapiens (Human).